We begin with the raw amino-acid sequence, 318 residues long: Beta-ketoacyl-[acyl-carrier-protein] synthase III (318 aa).

Residues C113 and H245 contribute to the active site. The interval 246 to 250 (QANIR) is ACP-binding. N275 is a catalytic residue.

This sequence belongs to the thiolase-like superfamily. FabH family. As to quaternary structure, homodimer.

Its subcellular location is the cytoplasm. The enzyme catalyses malonyl-[ACP] + acetyl-CoA + H(+) = 3-oxobutanoyl-[ACP] + CO2 + CoA. It functions in the pathway lipid metabolism; fatty acid biosynthesis. In terms of biological role, catalyzes the condensation reaction of fatty acid synthesis by the addition to an acyl acceptor of two carbons from malonyl-ACP. Catalyzes the first condensation reaction which initiates fatty acid synthesis and may therefore play a role in governing the total rate of fatty acid production. Possesses both acetoacetyl-ACP synthase and acetyl transacylase activities. Its substrate specificity determines the biosynthesis of branched-chain and/or straight-chain of fatty acids. The protein is Beta-ketoacyl-[acyl-carrier-protein] synthase III of Wolbachia pipientis subsp. Culex pipiens (strain wPip).